The chain runs to 268 residues: Tryptophan synthase alpha chain (268 aa).

Catalysis depends on proton acceptor residues glutamate 49 and aspartate 60.

This sequence belongs to the TrpA family. As to quaternary structure, tetramer of two alpha and two beta chains.

It carries out the reaction (1S,2R)-1-C-(indol-3-yl)glycerol 3-phosphate + L-serine = D-glyceraldehyde 3-phosphate + L-tryptophan + H2O. It participates in amino-acid biosynthesis; L-tryptophan biosynthesis; L-tryptophan from chorismate: step 5/5. In terms of biological role, the alpha subunit is responsible for the aldol cleavage of indoleglycerol phosphate to indole and glyceraldehyde 3-phosphate. The polypeptide is Tryptophan synthase alpha chain (Pseudomonas paraeruginosa (strain DSM 24068 / PA7) (Pseudomonas aeruginosa (strain PA7))).